The primary structure comprises 183 residues: Probable chorismate pyruvate-lyase 2 (183 aa).

Substrate is bound by residues Arg-76, Leu-114, and Glu-166.

It belongs to the UbiC family.

The protein resides in the cytoplasm. The enzyme catalyses chorismate = 4-hydroxybenzoate + pyruvate. Its pathway is cofactor biosynthesis; ubiquinone biosynthesis. In terms of biological role, removes the pyruvyl group from chorismate, with concomitant aromatization of the ring, to provide 4-hydroxybenzoate (4HB) for the ubiquinone pathway. The sequence is that of Probable chorismate pyruvate-lyase 2 from Pseudomonas fluorescens (strain Pf0-1).